A 170-amino-acid chain; its full sequence is Adenine phosphoribosyltransferase (170 aa).

Belongs to the purine/pyrimidine phosphoribosyltransferase family. In terms of assembly, homodimer.

It is found in the cytoplasm. It carries out the reaction AMP + diphosphate = 5-phospho-alpha-D-ribose 1-diphosphate + adenine. Its pathway is purine metabolism; AMP biosynthesis via salvage pathway; AMP from adenine: step 1/1. Catalyzes a salvage reaction resulting in the formation of AMP, that is energically less costly than de novo synthesis. The sequence is that of Adenine phosphoribosyltransferase from Thermotoga neapolitana (strain ATCC 49049 / DSM 4359 / NBRC 107923 / NS-E).